A 474-amino-acid chain; its full sequence is Transmembrane transporter FVEG_12640 (474 aa).

A compositionally biased stretch (polar residues) spans 1–15; the sequence is MASPTISSMEQYTPS. The interval 1-39 is disordered; the sequence is MASPTISSMEQYTPSSKDEKIVPLHGDAAGSDTEKGESR. Transmembrane regions (helical) follow at residues 72-92, 133-153, 164-184, 192-212, 231-251, 275-295, 317-337, 364-384, 387-407, and 431-451; these read ILAI…LCIV, LVGV…IVTS, GTCT…FSSI, WLTW…VVAV, WAPI…NIFI, ACLV…LVIY, VAYG…QHVA, LGIN…VPIL, LLGL…PALL, and LIMI…AVLI.

This sequence belongs to the amino acid/polyamine transporter 2 family.

The protein localises to the membrane. In terms of biological role, transmembrane transporter; part of the Fusarium detoxification of benzoxazolinone cluster 2 (FDB2) involved in the degradation of benzoxazolinones produced by the host plant. Maize, wheat, and rye produce the 2 benzoxazinone phytoanticipins 2,4-dihy-droxy-7-methoxy-1,4-benzoxazin-3-one (DIMBOA) and 2,4-dihydroxy-1,4-benzoxazin-3-one (DIBOA) that, due to their inherent instability once released, spontaneously degrade to the more stable corresponding benzoxazolinones, 6-methoxy-2-benzoxazolinone (MBOA) and 2-benzoxazolinone (BOA), respectively. Might be involved in the transport of metabolites of benzoxazolinone degradation. The protein is Transmembrane transporter FVEG_12640 of Gibberella moniliformis (strain M3125 / FGSC 7600) (Maize ear and stalk rot fungus).